Consider the following 509-residue polypeptide: Putative (R)-citramalate synthase CimA (509 aa).

The Pyruvate carboxyltransferase domain maps to 14–267 (VRIFDTTLRD…DTGIRTERLT (254 aa)).

The protein belongs to the alpha-IPM synthase/homocitrate synthase family. As to quaternary structure, homodimer.

The enzyme catalyses pyruvate + acetyl-CoA + H2O = (3R)-citramalate + CoA + H(+). The protein operates within amino-acid biosynthesis; L-isoleucine biosynthesis; 2-oxobutanoate from pyruvate: step 1/3. In terms of biological role, catalyzes the condensation of pyruvate and acetyl-coenzyme A to form (R)-citramalate. This is Putative (R)-citramalate synthase CimA (cimA) from Methanopyrus kandleri (strain AV19 / DSM 6324 / JCM 9639 / NBRC 100938).